We begin with the raw amino-acid sequence, 277 residues long: MSSSNCVALVTGANKGIGFVIVRDLCRRFSGDVVLTARDEARGRAAVQQLQAEGLSPLFHQLDIDDRQSIRALRDFLRKEYGGLDVLVNNAGIAFKTADTTPFHIQAEVTMKTNFFGTRDVCTELLPLIKPQGRVVNVSSFVSVNSLKKCSRELQQKFRSETITEEELVGLMNKFVEDTKNGVHRKEGWPDTAYGVTKIGVTVLSRIHARKLSEQRGGDKILLNACCPGWVRTDMGGPKASKSPEEGAETPVYLALLPSDAEGPHGEFISEKRVVQW.

Ser2 is subject to N-acetylserine. 2 positions are modified to phosphoserine: Ser2 and Ser30. NADP(+) contacts are provided by residues 10–34, 63–64, and Asn90; these read VTGANKGIGFVIVRDLCRRFSGDVV and DI. Residues 95 to 97 and Gln106 contribute to the glutathione site; that span reads FKT. Ser140 lines the substrate pocket. 193-194 is a glutathione binding site; that stretch reads AY. The active-site Proton acceptor is Tyr194. NADP(+) contacts are provided by residues 194-198 and 231-233; these read YGVTK and VRT. The residue at position 239 (Lys239) is an N6-1-carboxyethyl lysine.

It belongs to the short-chain dehydrogenases/reductases (SDR) family. As to quaternary structure, monomer.

The protein resides in the cytoplasm. It carries out the reaction a secondary alcohol + NADP(+) = a ketone + NADPH + H(+). The catalysed reaction is prostaglandin F2alpha + NADP(+) = prostaglandin E2 + NADPH + H(+). It catalyses the reaction prostaglandin E1 + NADP(+) = 15-oxoprostaglandin E1 + NADPH + H(+). The enzyme catalyses menadione + NADPH + H(+) = menadiol + NADP(+). It carries out the reaction prostaglandin D2 + NADP(+) = 15-oxoprostaglandin D2 + NADPH + H(+). The catalysed reaction is prostaglandin E2 + NADP(+) = 15-oxoprostaglandin E2 + NADPH + H(+). It catalyses the reaction prostaglandin F2alpha + NADP(+) = 15-oxoprostaglandin F2alpha + NADPH + H(+). The enzyme catalyses daunorubicin + NADPH + H(+) = 13-dihydrodaunorubicin + NADP(+). It carries out the reaction S-nitrosoglutathione + NADPH + H(+) = S-(hydroxysulfenamide)glutathione + NADP(+). The catalysed reaction is a primary alcohol + NADP(+) = an aldehyde + NADPH + H(+). It catalyses the reaction cortisol + NADPH + H(+) = 20beta-dihydrocortisol + NADP(+). The enzyme catalyses corticosterone + NADPH + H(+) = 20beta-dihydrocorticosterone + NADP(+). Functionally, NADPH-dependent reductase with broad substrate specificity. Catalyzes the reduction of a wide variety of carbonyl compounds including quinones, prostaglandins, menadione, plus various xenobiotics. Catalyzes the reduction of the antitumor anthracyclines doxorubicin and daunorubicin to the cardiotoxic compounds doxorubicinol and daunorubicinol. Can convert prostaglandin E to prostaglandin F2-alpha. Can bind glutathione, which explains its higher affinity for glutathione-conjugated substrates. Catalyzes the reduction of S-nitrosoglutathione. In addition, participates in the glucocorticoid metabolism by catalyzing the NADPH-dependent cortisol/corticosterone into 20beta-dihydrocortisol (20b-DHF) or 20beta-corticosterone (20b-DHB), which are weak agonists of NR3C1 and NR3C2 in adipose tissue. This is Carbonyl reductase [NADPH] 1 from Bos taurus (Bovine).